Here is a 96-residue protein sequence, read N- to C-terminus: Large ribosomal subunit protein bL28 (96 aa).

It belongs to the bacterial ribosomal protein bL28 family.

The chain is Large ribosomal subunit protein bL28 from Leptospira biflexa serovar Patoc (strain Patoc 1 / Ames).